Here is a 105-residue protein sequence, read N- to C-terminus: Met repressor (105 aa).

This sequence belongs to the MetJ family. In terms of assembly, homodimer.

It localises to the cytoplasm. In terms of biological role, this regulatory protein, when combined with SAM (S-adenosylmethionine) represses the expression of the methionine regulon and of enzymes involved in SAM synthesis. The sequence is that of Met repressor from Haemophilus ducreyi (strain 35000HP / ATCC 700724).